We begin with the raw amino-acid sequence, 450 residues long: UDP-N-acetylmuramoylalanine--D-glutamate ligase (450 aa).

119–125 (GTNGKTT) contacts ATP.

It belongs to the MurCDEF family.

The protein localises to the cytoplasm. It catalyses the reaction UDP-N-acetyl-alpha-D-muramoyl-L-alanine + D-glutamate + ATP = UDP-N-acetyl-alpha-D-muramoyl-L-alanyl-D-glutamate + ADP + phosphate + H(+). The protein operates within cell wall biogenesis; peptidoglycan biosynthesis. Its function is as follows. Cell wall formation. Catalyzes the addition of glutamate to the nucleotide precursor UDP-N-acetylmuramoyl-L-alanine (UMA). This is UDP-N-acetylmuramoylalanine--D-glutamate ligase from Lactococcus lactis subsp. lactis (strain IL1403) (Streptococcus lactis).